The primary structure comprises 416 residues: Tyrosine--tRNA ligase (416 aa).

Residue Tyr34 participates in L-tyrosine binding. Residues 39 to 48 carry the 'HIGH' region motif; the sequence is PTGDSLHIGH. Positions 165 and 169 each coordinate L-tyrosine. The short motif at 227–231 is the 'KMSKS' region element; the sequence is KFGKT. Lys230 is an ATP binding site. Residues 349-416 enclose the S4 RNA-binding domain; sequence ENIIIWLTDN…KKHYYLARVK (68 aa).

This sequence belongs to the class-I aminoacyl-tRNA synthetase family. TyrS type 1 subfamily. As to quaternary structure, homodimer.

The protein resides in the cytoplasm. It carries out the reaction tRNA(Tyr) + L-tyrosine + ATP = L-tyrosyl-tRNA(Tyr) + AMP + diphosphate + H(+). Functionally, catalyzes the attachment of tyrosine to tRNA(Tyr) in a two-step reaction: tyrosine is first activated by ATP to form Tyr-AMP and then transferred to the acceptor end of tRNA(Tyr). This is Tyrosine--tRNA ligase from Limosilactobacillus reuteri (strain DSM 20016) (Lactobacillus reuteri).